Consider the following 807-residue polypeptide: Zinc finger protein 594 (807 aa).

The tract at residues 1 to 23 (MKEWKSKMEISEEKKSARAASEK) is disordered. C2H2-type zinc fingers lie at residues 127 to 149 (YECKECEKTFNRSSNLIIHQRIH), 155 to 177 (YVCNECGKDSNQSSNLIIHQRIH), 183 to 205 (YICHECGKDFNQSSNLVRHKQIH), 211 to 233 (YECKECGKAFKGSSNLVLHQRIH), 239 to 261 (YLCNKCGKAFSQSTDLIIHHRIH), 267 to 289 (YECYDCGQMFSQSSHLVPHQRIH), 295 to 317 (LKCNECEKAFRQHSHLTEHQRLH), and 323 to 345 (YECHRCGKTFSGRTAFLKHQRLH). Residues 348 to 370 (EKIEECEKTFSKDEELREEQRIH) form a C2H2-type 9; degenerate zinc finger. C2H2-type zinc fingers lie at residues 376-398 (YWCNQCGRNFQGTSDLIRHQVTH), 404-426 (YECKECGKTFNQSSDLLRHHRIH), 432-454 (CVCSKCGKSFRGSSDLIRHHRVH), 460-482 (YECSECGKAFSQRSHLVTHQKIH), 488-510 (YQCTECGKAFRRRSLLIQHRRIH), and 516-538 (YECKECGKLFIWRTAFLKHQSLH). The C2H2-type 16; degenerate zinc-finger motif lies at 543-562 (LECEKTFSQDEELRGEQKIH). C2H2-type zinc fingers lie at residues 568 to 590 (YWCNQCGRAFQGSSDLIRHQVTH), 596 to 618 (YECKECGKTFNQSSDLLRHHRIH), 624 to 646 (YVCNKCGKSFRGSSDLIKHHRIH), 652 to 674 (YECSECGKAFSQRSHLATHQKIH), 680 to 702 (YQCSECGNAFRRRSLLIQHRRLH), and 708 to 730 (YECKECGKLFMWHTAFLKHQRLH). Residues 733-755 (EKLEECEKTFSKDEELRKEQRTH) form a C2H2-type 23; degenerate zinc finger. A C2H2-type 24 zinc finger spans residues 761 to 783 (YWCNQCSRTFQGSSDLIRHQVTH).

The protein belongs to the krueppel C2H2-type zinc-finger protein family.

Its subcellular location is the nucleus. Functionally, may be involved in transcriptional regulation. This Homo sapiens (Human) protein is Zinc finger protein 594 (ZNF594).